An 82-amino-acid chain; its full sequence is RNA-binding protein Hfq (82 aa).

The Sm domain maps to 11–71; sequence DTFLNSVRKS…ISTIMPAQPV (61 aa).

Belongs to the Hfq family. In terms of assembly, homohexamer.

Its function is as follows. RNA chaperone that binds small regulatory RNA (sRNAs) and mRNAs to facilitate mRNA translational regulation in response to envelope stress, environmental stress and changes in metabolite concentrations. Also binds with high specificity to tRNAs. This is RNA-binding protein Hfq from Caulobacter vibrioides (strain ATCC 19089 / CIP 103742 / CB 15) (Caulobacter crescentus).